The sequence spans 361 residues: DNA replication and repair protein RecF (361 aa).

30-37 (GPNGSGKT) lines the ATP pocket.

Belongs to the RecF family.

Its subcellular location is the cytoplasm. Functionally, the RecF protein is involved in DNA metabolism; it is required for DNA replication and normal SOS inducibility. RecF binds preferentially to single-stranded, linear DNA. It also seems to bind ATP. This is DNA replication and repair protein RecF from Yersinia pseudotuberculosis serotype IB (strain PB1/+).